We begin with the raw amino-acid sequence, 119 residues long: NADH-quinone oxidoreductase subunit A (119 aa).

The next 3 helical transmembrane spans lie at 7–27, 63–83, and 88–108; these read YPVLLFLLVGTGLGIALVSIG, LVAILFIIFDLETAFLFPWGV, and IGWPGFIAMMIFLLEFLLGFA.

This sequence belongs to the complex I subunit 3 family. As to quaternary structure, NDH-1 is composed of 14 different subunits. Subunits NuoA, H, J, K, L, M, N constitute the membrane sector of the complex.

It is found in the cell inner membrane. It carries out the reaction a quinone + NADH + 5 H(+)(in) = a quinol + NAD(+) + 4 H(+)(out). NDH-1 shuttles electrons from NADH, via FMN and iron-sulfur (Fe-S) centers, to quinones in the respiratory chain. The immediate electron acceptor for the enzyme in this species is believed to be ubiquinone. Couples the redox reaction to proton translocation (for every two electrons transferred, four hydrogen ions are translocated across the cytoplasmic membrane), and thus conserves the redox energy in a proton gradient. This Burkholderia mallei (strain NCTC 10247) protein is NADH-quinone oxidoreductase subunit A.